The chain runs to 553 residues: Putative transport protein YidE (553 aa).

5 helical membrane-spanning segments follow: residues 4 to 24 (IALT…IGNI), 28 to 48 (GVGF…HFVD), 65 to 85 (FGLI…FFAS), 95 to 115 (LFAV…HKIF), and 158 to 178 (MSYA…MWLM). 2 consecutive RCK C-terminal domains span residues 192–276 (KHES…VIGK) and 279–361 (DTSL…VVGN). Transmembrane regions (helical) follow at residues 371–391 (MLPV…PLFV), 393–413 (GFPV…ALIL), 437–457 (LGIV…FVDT), 464–484 (LSWI…VGLL), 493–513 (YLTL…LAFA), and 533–553 (LVMF…WGMG).

This sequence belongs to the AAE transporter (TC 2.A.81) family. YidE subfamily.

Its subcellular location is the cell membrane. The sequence is that of Putative transport protein YidE from Salmonella newport (strain SL254).